Consider the following 192-residue polypeptide: dTTP/UTP pyrophosphatase (192 aa).

Asp-71 (proton acceptor) is an active-site residue.

The protein belongs to the Maf family. YhdE subfamily. The cofactor is a divalent metal cation.

Its subcellular location is the cytoplasm. It carries out the reaction dTTP + H2O = dTMP + diphosphate + H(+). The catalysed reaction is UTP + H2O = UMP + diphosphate + H(+). Its function is as follows. Nucleoside triphosphate pyrophosphatase that hydrolyzes dTTP and UTP. May have a dual role in cell division arrest and in preventing the incorporation of modified nucleotides into cellular nucleic acids. The chain is dTTP/UTP pyrophosphatase from Clostridium kluyveri (strain NBRC 12016).